A 1224-amino-acid polypeptide reads, in one-letter code: Period circadian protein (1224 aa).

A compositionally biased stretch (polar residues) spans 1–15 (MEGGESTESTHNTKV). The disordered stretch occupies residues 1 to 175 (MEGGESTEST…AAQSFPIPSP (175 aa)). Low complexity predominate over residues 16-47 (SDSAYSNSCSNSQSQRSGSSKSRLSGSHSSGS). The Nuclear localization signal signature appears at 66-79 (KRNKDKSRKKKKNK). Over residues 66 to 79 (KRNKDKSRKKKKNK) the composition is skewed to basic residues. Basic and acidic residues predominate over residues 121-133 (ELQDQQHGEDHSE). PAS domains follow at residues 238–373 (DSFC…ATPI) and 391–497 (FAIR…RVFQ). 5 disordered regions span residues 632–764 (VTAP…GTAA), 788–807 (KKHR…SAND), 874–927 (GGSG…GPSS), 978–1008 (TPTS…QAAA), and 1094–1224 (TPAQ…HGDG). The segment covering 675-693 (NFTTASNIHMSSVTNTSIA) has biased composition (polar residues). 26 repeat units span residues 694-695 (GT), 697-698 (GT), 699-700 (GT), 701-702 (GT), 703-704 (GT), 705-706 (GT), 707-708 (GT), 709-710 (GT), 711-712 (GT), 713-714 (GT), 715-716 (GT), 717-718 (GT), 719-720 (GT), 721-722 (GT), 723-724 (GT), 725-726 (GT), 727-728 (GT), 729-730 (GT), 731-732 (GT), 733-734 (GT), 735-736 (GT), 737-738 (GT), 739-740 (GT), 741-742 (GT), 743-744 (GN), and 745-746 (GT). The segment covering 694–752 (GTGGTGTGTGTGTGTGTGTGTGTGTGTGTGTGTGTGTGTGTGTGTGTGTGNGTNSGTGT) has biased composition (gly residues). The interval 694–754 (GTGGTGTGTG…GTNSGTGTGT (61 aa)) is 30 X 2 AA approximate tandem repeats of G-[TN]. One copy of the 27; approximate repeat lies at 747 to 748 (NS). Tandem repeats lie at residues 749 to 750 (GT), 751 to 752 (GT), and 753 to 754 (GT). A regulates the rhythm of species-specific courtship song region spans residues 749–868 (GTGTGTASSS…GTGGVGSGGA (120 aa)). Over residues 794–805 (RGRTGEKSKKSA) the composition is skewed to basic and acidic residues. A compositionally biased stretch (gly residues) spans 895–907 (GTPGGAGGGGGAG). Residues 908 to 927 (AAAAAGASSSVGSSTPGPSS) are compositionally biased toward low complexity. 2 stretches are compositionally biased toward polar residues: residues 1094-1117 (TPAQ…SSAA) and 1143-1154 (PPCSSSNPANNK). A compositionally biased stretch (low complexity) spans 1158–1177 (DSNGNSDDMDGSSFSSFYSS). The segment covering 1209 to 1224 (KIMEHPEEDQTQHGDG) has biased composition (basic and acidic residues).

In terms of assembly, forms a heterodimer with timeless (TIM); the complex then translocates into the nucleus. A proportion of the protein exists as homodimer. In terms of processing, phosphorylated with a circadian rhythmicity, probably by the double-time protein (dbt). Phosphorylation could be implicated in the stability of per monomer and in the formation of heterodimer per-tim. As to expression, expressed in neural tissues and in several nonneural tissues of the abdomen. Malpighian tubules contain a circadian pacemaker that functions independently of the brain. Expression oscillates in all tissues studied except for the ovary. PER-A isoforms are mainly expressed in adult's head.

The protein resides in the nucleus. The protein localises to the cytoplasm. Its subcellular location is the perinuclear region. It is found in the cytosol. Functionally, essential for biological clock functions. Determines the period length of circadian and ultradian rhythms; an increase in PER dosage leads to shortened circadian rhythms and a decrease leads to lengthened circadian rhythms. Essential for the circadian rhythmicity of locomotor activity, eclosion behavior, and for the rhythmic component of the male courtship song that originates in the thoracic nervous system. The biological cycle depends on the rhythmic formation and nuclear localization of the TIM-PER complex. Light induces the degradation of TIM, which promotes elimination of PER. Nuclear activity of the heterodimer coordinatively regulates PER and TIM transcription through a negative feedback loop. Behaves as a negative element in circadian transcriptional loop. Does not appear to bind DNA, suggesting indirect transcriptional inhibition. Required for binding of cwo to the E box regions in the promoters of target genes of the transcriptional activator Clock, probably by binding to Clock-cycle heterodimers, reducing their affinity for E box binding and allowing cwo to bind instead. The sequence is that of Period circadian protein (per) from Drosophila melanogaster (Fruit fly).